We begin with the raw amino-acid sequence, 202 residues long: Translation initiation factor IF-3 (202 aa).

Belongs to the IF-3 family. In terms of assembly, monomer.

It localises to the cytoplasm. Its function is as follows. IF-3 binds to the 30S ribosomal subunit and shifts the equilibrium between 70S ribosomes and their 50S and 30S subunits in favor of the free subunits, thus enhancing the availability of 30S subunits on which protein synthesis initiation begins. The protein is Translation initiation factor IF-3 of Prochlorococcus marinus (strain NATL2A).